Reading from the N-terminus, the 483-residue chain is tRNA-2-methylthio-N(6)-dimethylallyladenosine synthase (483 aa).

The MTTase N-terminal domain maps to 31–148 (KKLYIETQGC…LPQMLDQHHA (118 aa)). Cysteine 40, cysteine 77, cysteine 111, cysteine 192, cysteine 196, and cysteine 199 together coordinate [4Fe-4S] cluster. Positions 178 to 410 (RVEGFKAFVS…QQVIKQSSIE (233 aa)) constitute a Radical SAM core domain. Positions 413 to 477 (DAMLGKIERV…LNLVYGELLN (65 aa)) constitute a TRAM domain.

The protein belongs to the methylthiotransferase family. MiaB subfamily. In terms of assembly, monomer. It depends on [4Fe-4S] cluster as a cofactor.

Its subcellular location is the cytoplasm. It carries out the reaction N(6)-dimethylallyladenosine(37) in tRNA + (sulfur carrier)-SH + AH2 + 2 S-adenosyl-L-methionine = 2-methylsulfanyl-N(6)-dimethylallyladenosine(37) in tRNA + (sulfur carrier)-H + 5'-deoxyadenosine + L-methionine + A + S-adenosyl-L-homocysteine + 2 H(+). In terms of biological role, catalyzes the methylthiolation of N6-(dimethylallyl)adenosine (i(6)A), leading to the formation of 2-methylthio-N6-(dimethylallyl)adenosine (ms(2)i(6)A) at position 37 in tRNAs that read codons beginning with uridine. This is tRNA-2-methylthio-N(6)-dimethylallyladenosine synthase from Acinetobacter baumannii (strain ACICU).